Here is a 79-residue protein sequence, read N- to C-terminus: MKQAINKSKRSSRRRLPPIRSGEIIDYKNINLLRRFISEQGKILSRRMNRLTSKQQRLMTIAIKRARVLALLPFLNNEN.

Belongs to the bacterial ribosomal protein bS18 family. Part of the 30S ribosomal subunit.

The protein resides in the plastid. Its subcellular location is the chloroplast. This Physcomitrium patens (Spreading-leaved earth moss) protein is Small ribosomal subunit protein bS18c.